A 678-amino-acid chain; its full sequence is Translation initiation factor eIF2B subunit epsilon (678 aa).

Threonine 172 is modified (phosphothreonine). The disordered stretch occupies residues 467–489; that stretch reads STNELHLSDSESSETSSSSEEDM. Serine 500 is subject to Phosphoserine. Threonine 503 bears the Phosphothreonine mark. At serine 506 the chain carries Phosphoserine. One can recognise a W2 domain in the interval 508–674; that stretch reads DFDEGDFNKE…NTAESESESE (167 aa).

It belongs to the eIF-2B gamma/epsilon subunits family. In terms of assembly, component of the translation initiation factor 2B (eIF2B) complex which is a heterodecamer of two sets of five different subunits: alpha, beta, gamma, delta and epsilon. Subunits alpha, beta and delta comprise a regulatory subcomplex and subunits epsilon and gamma comprise a catalytic subcomplex. Within the complex, the hexameric regulatory complex resides at the center, with the two heterodimeric catalytic subcomplexes bound on opposite sides.

Its subcellular location is the cytoplasm. It is found in the cytosol. Acts as a component of the translation initiation factor 2B (eIF2B) complex, which catalyzes the exchange of GDP for GTP on the eukaryotic initiation factor 2 (eIF2) complex gamma subunit. Its guanine nucleotide exchange factor activity is repressed when bound to eIF2 complex phosphorylated on the alpha subunit, thereby limiting the amount of methionyl-initiator methionine tRNA available to the ribosome and consequently global translation is repressed. The sequence is that of Translation initiation factor eIF2B subunit epsilon (tif225) from Schizosaccharomyces pombe (strain 972 / ATCC 24843) (Fission yeast).